Here is a 455-residue protein sequence, read N- to C-terminus: C4-dicarboxylate transport protein (455 aa).

8 helical membrane passes run 20–40 (HLYFQVLCAIVAGALIGHFYP), 59–79 (MIIAPVIFLTIVTGLAGMGTL), 91–111 (GYFLTFSTLALVVGLITANVI), 160–180 (GNILQVLFVAILFGIGLILIG), 209–229 (PIGAFGAFAFTIGKYGIASVV), 231–251 (LATLVGTFYLTSALFVIVVLG), 344–364 (LLLVAMLSSKGAAGVTGAGFI), and 367–387 (AATLSVVPTVPVAGMALILGV).

This sequence belongs to the dicarboxylate/amino acid:cation symporter (DAACS) (TC 2.A.23) family.

It localises to the cell inner membrane. In terms of biological role, responsible for the transport of dicarboxylates such as succinate, fumarate, and malate from the periplasm across the membrane. This chain is C4-dicarboxylate transport protein, found in Paracoccus denitrificans (strain Pd 1222).